Here is a 203-residue protein sequence, read N- to C-terminus: TATA-box-binding protein (203 aa).

Tandem repeats lie at residues 25–101 (IENI…LKAF) and 116–192 (IQNI…ARKL).

Belongs to the TBP family.

Functionally, general factor that plays a role in the activation of archaeal genes transcribed by RNA polymerase. Binds specifically to the TATA box promoter element which lies close to the position of transcription initiation. The sequence is that of TATA-box-binding protein (tbp) from Aeropyrum pernix (strain ATCC 700893 / DSM 11879 / JCM 9820 / NBRC 100138 / K1).